The sequence spans 117 residues: Large ribosomal subunit protein bL19 (117 aa).

This sequence belongs to the bacterial ribosomal protein bL19 family.

Functionally, this protein is located at the 30S-50S ribosomal subunit interface and may play a role in the structure and function of the aminoacyl-tRNA binding site. The sequence is that of Large ribosomal subunit protein bL19 from Shewanella piezotolerans (strain WP3 / JCM 13877).